We begin with the raw amino-acid sequence, 167 residues long: uncharacterized protein (167 aa).

Residues 28 to 59 (LTGIREELKADIDETRLIAESVLEEKEKKVVE) are a coiled coil.

This is an uncharacterized protein from Aquifex aeolicus (strain VF5).